The following is a 212-amino-acid chain: Bcl-2-related ovarian killer protein (212 aa).

At serine 7 the chain carries Phosphoserine. The tract at residues 15–45 (MDAFDRSPTDKELVAQAKALGREYVHARLLR) is interactions with ITPR1. Residues lysine 25 and lysine 32 each participate in a glycyl lysine isopeptide (Lys-Gly) (interchain with G-Cter in ubiquitin) cross-link. A BH4 motif is present at residues 32–44 (KALGREYVHARLL). The BH3 signature appears at 66–82 (VCAVLLRLGDELEMIRP). The nuclear export signal stretch occupies residues 70-78 (LLRLGDELE). The BH1 motif lies at 112–131 (HIFSAGITWGKVVSLYAVAA). Residues lysine 159 and lysine 176 each participate in a glycyl lysine isopeptide (Lys-Gly) (interchain with G-Cter in ubiquitin) cross-link. Residues 164-178 (WLRRRGGWTDVLKCV) carry the BH2 motif. A helical membrane pass occupies residues 189–209 (WLVAALCSFGRFLKAAFFVLL).

This sequence belongs to the Bcl-2 family. In terms of assembly, monomer; positively regulates apoptotic process. Homodimer. Heterodimer. Oligomer; promoted by apoptotic stimuli and BH3-only proteins; mediates constitutive activation. Interacts (via BH4 domain) with ITPR1; enhances BOK expression and stabilization; limits apoptosis and prevents ubiquitination and then degradation; protects ITPR1 from proteolysis by CASP3 during apoptosis. Interacts with ITPR2 and ITPR3; binds most strongly to ITPR2, and barely to ITPR3; regulates their expression. Interacts with XPO1; translocates to the cytoplasm. Interacts with BNIP3; promotes oligomerization. In terms of processing, ubiquitinated by AMFR/gp78 E3 ubiquitin ligase complex; mediates degradation by ubiquitin-proteasome pathway in a VCP/p97-dependent manner; prevents from pro-apoptotic activity; promotes degradation of newly synthesized proteins that are not ITPR1 associated. In terms of tissue distribution, expressed mainly in oocytes; weak expression in granulosa cells of the developing follicles. In adult human ovaries, expressed in granulosa cells at all follicular stages, but expression in primordial/primary follicles granulosa cell is stronger than in secondary and antral follicles.

The protein resides in the mitochondrion membrane. Its subcellular location is the endoplasmic reticulum membrane. The protein localises to the mitochondrion inner membrane. It is found in the cytoplasm. It localises to the nucleus. The protein resides in the mitochondrion. Its subcellular location is the endoplasmic reticulum. The protein localises to the mitochondrion outer membrane. It is found in the early endosome membrane. It localises to the recycling endosome membrane. The protein resides in the nucleus outer membrane. Its subcellular location is the golgi apparatus. The protein localises to the cis-Golgi network membrane. It is found in the trans-Golgi network membrane. It localises to the membrane. Its function is as follows. Apoptosis regulator that functions through different apoptotic signaling pathways. Plays a roles as pro-apoptotic protein that positively regulates intrinsic apoptotic process in a BAX- and BAK1-dependent manner or in a BAX- and BAK1-independent manner. In response to endoplasmic reticulum stress promotes mitochondrial apoptosis through downstream BAX/BAK1 activation and positive regulation of PERK-mediated unfolded protein response. Activates apoptosis independently of heterodimerization with survival-promoting BCL2 and BCL2L1 through induction of mitochondrial outer membrane permeabilization, in a BAX- and BAK1-independent manner, in response to inhibition of ERAD-proteasome degradation system, resulting in cytochrome c release. In response to DNA damage, mediates intrinsic apoptotic process in a TP53-dependent manner. Plays a role in granulosa cell apoptosis by CASP3 activation. Plays a roles as anti-apoptotic protein during neuronal apoptotic process, by negatively regulating poly ADP-ribose polymerase-dependent cell death through regulation of neuronal calcium homeostasis and mitochondrial bioenergetics in response to NMDA excitation. In addition to its role in apoptosis, may regulate trophoblast cell proliferation during the early stages of placental development, by acting on G1/S transition through regulation of CCNE1 expression. May also play a role as an inducer of autophagy by disrupting interaction between MCL1 and BECN1. Pro-apoptotic molecule exerting its function through the mitochondrial pathway. This chain is Bcl-2-related ovarian killer protein, found in Homo sapiens (Human).